Here is a 414-residue protein sequence, read N- to C-terminus: Protein RecA (414 aa).

Residue 78 to 85 (GPESSGKT) participates in ATP binding. Residues 361–384 (QEKAVEALKKEEGSKEDALTGNKD) are compositionally biased toward basic and acidic residues. A disordered region spans residues 361 to 414 (QEKAVEALKKEEGSKEDALTGNKDETDDSAQKNSAASKAKRAEVVGLPADDSLF).

It belongs to the RecA family.

The protein localises to the cytoplasm. In terms of biological role, can catalyze the hydrolysis of ATP in the presence of single-stranded DNA, the ATP-dependent uptake of single-stranded DNA by duplex DNA, and the ATP-dependent hybridization of homologous single-stranded DNAs. It interacts with LexA causing its activation and leading to its autocatalytic cleavage. The protein is Protein RecA of Treponema denticola (strain ATCC 35405 / DSM 14222 / CIP 103919 / JCM 8153 / KCTC 15104).